We begin with the raw amino-acid sequence, 115 residues long: uncharacterized protein (115 aa).

The tract at residues 1-86 (RRPARSGGDG…LSSQLVRPSR (86 aa)) is disordered.

This is an uncharacterized protein from Homo sapiens (Human).